A 143-amino-acid chain; its full sequence is UPF0651 protein P31B10.02, mitochondrial (143 aa).

The Oxidoreductase-like domain maps to 48–93 (IYDGIRVPPKPEEPLNCCQSGCAICVWDVYADDLEEYNRARRKAKR).

The protein belongs to the UPF0651 family.

It is found in the mitochondrion. This chain is UPF0651 protein P31B10.02, mitochondrial, found in Schizosaccharomyces pombe (strain 972 / ATCC 24843) (Fission yeast).